The following is a 617-amino-acid chain: Cytoplasmic polyadenylation element-binding protein 1 (617 aa).

The segment at 1-38 is disordered; sequence MQSQLKACGDAPAPSCSLHHRRTISKKPSNGGNSGGGG. 2 consecutive RRM domains span residues 273–377 and 394–465; these read RKVF…AWRL and RTVF…HADT. 2 disordered regions span residues 534-568 and 592-617; these read DQTR…QNVT and NQNN…AIGY. A compositionally biased stretch (basic residues) spans 542–563; that stretch reads PPHHSTSHYHHRSTPSHHHNHT.

Interacts with fbf-1.

Functionally, cytoplasmic polyadenylation element binding protein that binds to and regulates the translation of specific mRNAs. Essential for progression through meiosis. Involved in spermatogenesis. This chain is Cytoplasmic polyadenylation element-binding protein 1 (cpb-1), found in Caenorhabditis japonica.